The primary structure comprises 197 residues: Wadjet protein JetB (197 aa).

Component of antiplasmid transformation system Wadjet type I, composed of JetA, JetB, JetC and JetD. Expression of Wadjet type I in B.subtilis (strain BEST7003) reduces the transformation efficiency of plasmid pHCMC05. This chain is Wadjet protein JetB, found in Bacillus cereus (strain Q1).